A 192-amino-acid chain; its full sequence is Phosphoheptose isomerase (192 aa).

In terms of domain architecture, SIS spans 37–192; sequence LADSFKAGGK…IQLIEKEMEK (156 aa). Substrate is bound at residue 52 to 54; it reads NGG. Residues H61 and E65 each coordinate Zn(2+). Substrate is bound by residues E65, 93–94, 119–121, S124, and Q172; these read ND and STS. Residues Q172 and H180 each coordinate Zn(2+).

This sequence belongs to the SIS family. GmhA subfamily. Homotetramer. Zn(2+) serves as cofactor.

It is found in the cytoplasm. The catalysed reaction is 2 D-sedoheptulose 7-phosphate = D-glycero-alpha-D-manno-heptose 7-phosphate + D-glycero-beta-D-manno-heptose 7-phosphate. The protein operates within carbohydrate biosynthesis; D-glycero-D-manno-heptose 7-phosphate biosynthesis; D-glycero-alpha-D-manno-heptose 7-phosphate and D-glycero-beta-D-manno-heptose 7-phosphate from sedoheptulose 7-phosphate: step 1/1. In terms of biological role, catalyzes the isomerization of sedoheptulose 7-phosphate in D-glycero-D-manno-heptose 7-phosphate. The polypeptide is Phosphoheptose isomerase (Proteus mirabilis (strain HI4320)).